Consider the following 186-residue polypeptide: Ribosome-recycling factor (186 aa).

It belongs to the RRF family.

The protein localises to the cytoplasm. In terms of biological role, responsible for the release of ribosomes from messenger RNA at the termination of protein biosynthesis. May increase the efficiency of translation by recycling ribosomes from one round of translation to another. The chain is Ribosome-recycling factor from Ralstonia pickettii (strain 12J).